Here is a 145-residue protein sequence, read N- to C-terminus: Maximins 3/H3 type 1 (145 aa).

Residues 1 to 18 (MNFKYIVAVSFLIASAYA) form the signal peptide. 2 consecutive propeptides follow at residues 19–43 (RSVQNDEQSLSQRDVLEEEESLREI) and 74–124 (RIAE…KEKR). Position 144 is an isoleucine amide (I144).

The protein belongs to the bombinin family. In terms of tissue distribution, expressed by the skin glands.

The protein resides in the secreted. In terms of biological role, maximin-3 shows antibacterial activity against both Gram-positive and Gram-negative bacteria. It also shows antimicrobial activity against the fungus C.albicans, but not against A.flavus nor P.uticale. It has little hemolytic activity. It possess a significant cytotoxicity against tumor cell lines. It possess a significant anti-HIV activity. It shows high spermicidal activity. Functionally, maximin-H3 shows antibacterial activity against both Gram-positive and Gram-negative bacteria. It also shows antimicrobial activity against the fungus C.albicans. Shows strong hemolytic activity. In Bombina maxima (Giant fire-bellied toad), this protein is Maximins 3/H3 type 1.